Reading from the N-terminus, the 471-residue chain is Argininosuccinate lyase (471 aa).

It belongs to the lyase 1 family. Argininosuccinate lyase subfamily.

It localises to the cytoplasm. The enzyme catalyses 2-(N(omega)-L-arginino)succinate = fumarate + L-arginine. Its pathway is amino-acid biosynthesis; L-arginine biosynthesis; L-arginine from L-ornithine and carbamoyl phosphate: step 3/3. The protein is Argininosuccinate lyase of Ralstonia pickettii (strain 12J).